Here is an 800-residue protein sequence, read N- to C-terminus: Heterogeneous nuclear ribonucleoprotein U (800 aa).

N-acetylserine is present on S2. Phosphoserine is present on S4. One can recognise an SAP domain in the interval 8 to 42 (VKKLKVSELKEELKKRRLSDKGLKADLMDRLQAAL). N6-acetyllysine is present on residues K17 and K21. Residues 41-257 (ALDNEAGGRP…PQPPVEEEDE (217 aa)) form a disordered region. Phosphoserine is present on S58. Composition is skewed to low complexity over residues 71 to 80 (AGLEQEAAAG) and 103 to 113 (ENGAAGAADAG). 2 stretches are compositionally biased toward acidic residues: residues 114 to 128 (AMEEEEAASEDENGD) and 134 to 147 (EGEDELGDEEEGAG). Positions 153 to 173 (GEQQSQPPAAAAQQQPSQQRG) are enriched in low complexity. At K181 the chain carries N6-acetyllysine. S182 bears the ADP-ribosylserine mark. The span at 194–205 (APPGARQGQQQA) shows a compositional bias: low complexity. The segment covering 209–242 (GKTEQKGGDKKRGVKRPREDHGRGYFEYIEENKY) has biased composition (basic and acidic residues). Position 231 is a citrulline (R231). Residue K241 is modified to N6-acetyllysine; alternate. Residue K241 forms a Glycyl lysine isopeptide (Lys-Gly) (interchain with G-Cter in SUMO1); alternate linkage. Residue K241 forms a Glycyl lysine isopeptide (Lys-Gly) (interchain with G-Cter in SUMO2); alternate linkage. The residue at position 242 (Y242) is a Phosphotyrosine. S243 and S247 each carry phosphoserine. The region spanning 244–440 (RAKSPQPPVE…VEFNFGQKEK (197 aa)) is the B30.2/SPRY domain. A Phosphothreonine modification is found at T262. K328 is modified (N6-acetyllysine). The interval 464 to 648 (PKGPEEKKDC…QKLLEQYKEE (185 aa)) is ATPase domain. Residue K471 forms a Glycyl lysine isopeptide (Lys-Gly) (interchain with G-Cter in SUMO2) linkage. Position 480–487 (480–487 (GLPGAGKT)) interacts with ATP. N6-acetyllysine; alternate occurs at positions 492 and 500. Residues K492 and K500 each participate in a glycyl lysine isopeptide (Lys-Gly) (interchain with G-Cter in SUMO2); alternate cross-link. T508 is modified (phosphothreonine). K512 participates in a covalent cross-link: Glycyl lysine isopeptide (Lys-Gly) (interchain with G-Cter in SUMO2). K527 is modified (N6-acetyllysine). K541 carries the N6-acetyllysine; alternate modification. K541 is covalently cross-linked (Glycyl lysine isopeptide (Lys-Gly) (interchain with G-Cter in SUMO2); alternate). Residue K550 forms a Glycyl lysine isopeptide (Lys-Gly) (interchain with G-Cter in SUMO2) linkage. T558 carries the phosphothreonine modification. Glycyl lysine isopeptide (Lys-Gly) (interchain with G-Cter in SUMO2) cross-links involve residues K585 and K602. Residues 587–602 (EDYKQRTQKKAEVEGK) form an actin-binding region. The residue at position 611 (K611) is an N6-acetyllysine; alternate. K611 participates in a covalent cross-link: Glycyl lysine isopeptide (Lys-Gly) (interchain with G-Cter in SUMO2); alternate. The stretch at 626–653 (DEITYVELQKEEAQKLLEQYKEESKKAL) forms a coiled coil. Residues K640 and K646 each participate in a glycyl lysine isopeptide (Lys-Gly) (interchain with G-Cter in SUMO2) cross-link. The span at 647–659 (EESKKALPPEKKQ) shows a compositional bias: basic and acidic residues. The disordered stretch occupies residues 647-729 (EESKKALPPE…GSGGIGYPYP (83 aa)). R678 is modified (omega-N-methylarginine). Residues 686–704 (GGFNMRGGNFRGGAPGNRG) show a composition bias toward gly residues. Residues 690 to 715 (MRGGNFRGGAPGNRGGYNRRGNMPQR) form an RNA-binding RGG-box region. 3 positions are modified to asymmetric dimethylarginine: R691, R696, and R703. Asymmetric dimethylarginine; alternate is present on residues R709 and R715. Omega-N-methylarginine; alternate occurs at positions 709 and 715. A compositionally biased stretch (gly residues) spans 715–725 (RGGGGGSGGIG). An asymmetric dimethylarginine mark is found at R730 and R737. The interval 745–774 (NYNRGGMPNRGNYNQNFRGRGNNRGYKNQS) is disordered. K789 bears the N6-acetyllysine; alternate mark. Residue K789 forms a Glycyl lysine isopeptide (Lys-Gly) (interchain with G-Cter in SUMO2); alternate linkage.

In terms of assembly, oligomer (via ATPase domain and RNA-binding RGG-box region); oligomerization occurs upon ATP-binding in a chromatin-associated RNAs (caRNAs)- and transcription-dependent manner and is required for chromatin decompaction. ATP hydrolysis is required to cycle from an oligomeric to monomeric state to compact chromatin. Component of the coding region determinant (CRD)-mediated complex, composed of DHX9, HNRNPU, IGF2BP1, SYNCRIP and YBX1. Identified in the spliceosome C complex. Identified in a IGF2BP1-dependent mRNP granule complex containing untranslated mRNAs. Associates with heterogeneous nuclear ribonucleoprotein (hnRNP) particles. Associates (via middle region) with the C-terminal domain (CTD) RNA polymerase II (Pol II) holoenzyme; this association occurs in a RNA-independent manner. Associates (via middle region) with the core-TFIIH basal transcription factor complex; this association inhibits the CTD phosphorylation of RNA polymerase II holoenzyme by down-regulating TFIIH kinase activity. Associates with the telomerase holoenzyme complex. Associates with spindle microtubules (MTs) in a TPX2-dependent manner. Interacts (via C-terminus) with actin; this interaction is direct and mediates association with the phosphorylated CTD of RNA polymerase II and is disrupted in presence of the long non-coding H19 RNA. Interacts with AURKA. Interacts (via C-terminus) with CBX5; this interaction is, at least in part, RNA-dependent. Interacts with CR2. Interacts with CRY1. Interacts (via C-terminus) with EP300; this interaction enhances DNA-binding to nuclear scaffold/matrix attachment region (S/MAR) elements. Interacts with ERBB4. Interacts with GEMIN5. Interacts with IGF2BP1. Interacts with IGF2BP2 and IGF2BP3. Interacts with NCL; this interaction occurs during mitosis. Interacts (via C-terminus) with NR3C1 (via C-terminus). Interacts with PLK1; this interaction induces phosphorylation of HNRNPU at Ser-58 in mitosis. Interacts with POU3F4. Interacts with SMARCA4; this interaction occurs in embryonic stem cells and stimulates global Pol II-mediated transcription. Interacts (via C-terminus) with TOP2A; this interaction protects the topoisomerase TOP2A from degradation and positively regulates the relaxation of supercoiled DNA by TOP2A in a RNA-dependent manner. Interacts with TPX2; this interaction recruits HNRNPU to spindle microtubules (MTs). Interacts with UBQLN2. Interacts (via RNA-binding RGG-box region) with ZBTB7B; the interaction facilitates the recruitment of long non-coding RNA Blnc1 by ZBTB7B. Interacts with ERCC6. Cleaved at Asp-94 by CASP3 during T-cell apoptosis, resulting in a loss of DNA- and chromatin-binding activities. In terms of processing, extensively phosphorylated. Phosphorylated on Ser-58 by PLK1 and dephosphorylated by protein phosphatase 2A (PP2A) in mitosis. Post-translationally, arg-709 and Arg-715 are dimethylated, probably to asymmetric dimethylarginine. Citrullinated by PADI4.

It localises to the nucleus. The protein resides in the nucleus matrix. The protein localises to the chromosome. It is found in the nucleus speckle. Its subcellular location is the cytoplasm. It localises to the cytoskeleton. The protein resides in the microtubule organizing center. The protein localises to the centrosome. It is found in the centromere. Its subcellular location is the kinetochore. It localises to the spindle. The protein resides in the spindle pole. The protein localises to the midbody. It is found in the cell surface. Its subcellular location is the cytoplasmic granule. Functionally, DNA- and RNA-binding protein involved in several cellular processes such as nuclear chromatin organization, telomere-length regulation, transcription, mRNA alternative splicing and stability, Xist-mediated transcriptional silencing and mitotic cell progression. Plays a role in the regulation of interphase large-scale gene-rich chromatin organization through chromatin-associated RNAs (caRNAs) in a transcription-dependent manner, and thereby maintains genomic stability. Required for the localization of the long non-coding Xist RNA on the inactive chromosome X (Xi) and the subsequent initiation and maintenance of X-linked transcriptional gene silencing during X-inactivation. Plays a role as a RNA polymerase II (Pol II) holoenzyme transcription regulator. Promotes transcription initiation by direct association with the core-TFIIH basal transcription factor complex for the assembly of a functional pre-initiation complex with Pol II in a actin-dependent manner. Blocks Pol II transcription elongation activity by inhibiting the C-terminal domain (CTD) phosphorylation of Pol II and dissociates from Pol II pre-initiation complex prior to productive transcription elongation. Positively regulates CBX5-induced transcriptional gene silencing and retention of CBX5 in the nucleus. Negatively regulates glucocorticoid-mediated transcriptional activation. Key regulator of transcription initiation and elongation in embryonic stem cells upon leukemia inhibitory factor (LIF) signaling. Involved in the long non-coding RNA H19-mediated Pol II transcriptional repression. Participates in the circadian regulation of the core clock component BMAL1 transcription. Plays a role in the regulation of telomere length. Plays a role as a global pre-mRNA alternative splicing modulator by regulating U2 small nuclear ribonucleoprotein (snRNP) biogenesis. Plays a role in mRNA stability. Component of the CRD-mediated complex that promotes MYC mRNA stabilization. Enhances the expression of specific genes, such as tumor necrosis factor TNFA, by regulating mRNA stability, possibly through binding to the 3'-untranslated region (UTR). Plays a role in mitotic cell cycle regulation. Involved in the formation of stable mitotic spindle microtubules (MTs) attachment to kinetochore, spindle organization and chromosome congression. Phosphorylation at Ser-58 by PLK1 is required for chromosome alignement and segregation and progression through mitosis. Also contributes to the targeting of AURKA to mitotic spindle MTs. Binds to double- and single-stranded DNA and RNA, poly(A), poly(C) and poly(G) oligoribonucleotides. Binds to chromatin-associated RNAs (caRNAs). Associates with chromatin to scaffold/matrix attachment region (S/MAR) elements in a chromatin-associated RNAs (caRNAs)-dependent manner. Binds (via RNA-binding RGG-box region) to the long non-coding Xist RNA; this binding is direct and bridges the Xist RNA and the inactive chromosome X (Xi). Binds the long non-coding H19 RNA. Binds to SMN1/2 pre-mRNAs at G/U-rich regions. Binds to small nuclear RNAs (snRNAs). Binds to the 3'-UTR of TNFA mRNA. Also negatively regulates embryonic stem cell differentiation upon LIF signaling. Required for embryonic development. Binds to brown fat long non-coding RNA 1 (Blnc1); facilitates the recruitment of Blnc1 by ZBTB7B required to drive brown and beige fat development and thermogenesis. This Mus musculus (Mouse) protein is Heterogeneous nuclear ribonucleoprotein U.